Consider the following 403-residue polypeptide: Phosphopentomutase (403 aa).

Mn(2+) contacts are provided by D13, D298, H303, D339, H340, and H351.

It belongs to the phosphopentomutase family. Mn(2+) serves as cofactor.

The protein resides in the cytoplasm. It carries out the reaction 2-deoxy-alpha-D-ribose 1-phosphate = 2-deoxy-D-ribose 5-phosphate. The catalysed reaction is alpha-D-ribose 1-phosphate = D-ribose 5-phosphate. It functions in the pathway carbohydrate degradation; 2-deoxy-D-ribose 1-phosphate degradation; D-glyceraldehyde 3-phosphate and acetaldehyde from 2-deoxy-alpha-D-ribose 1-phosphate: step 1/2. In terms of biological role, isomerase that catalyzes the conversion of deoxy-ribose 1-phosphate (dRib-1-P) and ribose 1-phosphate (Rib-1-P) to deoxy-ribose 5-phosphate (dRib-5-P) and ribose 5-phosphate (Rib-5-P), respectively. The polypeptide is Phosphopentomutase (Streptococcus thermophilus (strain CNRZ 1066)).